A 742-amino-acid polypeptide reads, in one-letter code: MSTNPNTPAPPASRTNPISLRIYKAIGTSFDDVSSREALEIASGMYGPEDPKAKGKAQPEYEELEEDDDTLPKRRTLKGQSAAIARKYLKQDIETCLATGSTKFLEAFAEVDQKLNVLREHMQEMQVRCDQVQSELDQANSGTKFLLERADVLRSQRDSAQLRAHLITLFLSRFTLSNSELTALTSREVTIGQPLFDALDHVEKIRTDCEVLLSGEEGKAQAGLDIMSLTSEQLESGYSKIHRYCQFEFRQFTREAQLEASSVMRQAICRLRDRPALLADAIQTLTSTRQSSILHQFLDALTRGGPGGLPRPIEIHAHDPTRYVGDMLAWVHQTTATEHEFLEGMFGVKEKKRWVGQERGGEEGEEERMASEVLDKDLEGLSRPLKLRIQETIKSQEGIIMTYKIANLLHFYLVTMRKTIGGKAMLVQTLQEIHDQAYIAFYETLDAQGRGLLRFLHPPDATLTPPITLRDAAQILRELLFVYSTSLIDPAERESDADLAKLLDKAVGPCVEMCERMAEMRRGKSGGGEWERDIFMVNSLGYLEHTLEMYDFTTKTLHMLDEKIKTHVESMTFEHHGKLLESCGLAAVMRTIRTRPEDTPLSRLHATSPKSLTSALSKFSTWISTVDPSTSPRLALLTSPRLAVEIHRKALRKIYDAYGEICERVLDKAEGYEFGETMLRRGRDEVGVALGVGEDWELEEDTEEKSMKQKEQQDEDTEDQGEKGIMQEEHKAQDAGNTEDKA.

Positions 692–742 (VGEDWELEEDTEEKSMKQKEQQDEDTEDQGEKGIMQEEHKAQDAGNTEDKA) are disordered. The span at 694-703 (EDWELEEDTE) shows a compositional bias: acidic residues. Residues 720 to 742 (QGEKGIMQEEHKAQDAGNTEDKA) are compositionally biased toward basic and acidic residues.

Belongs to the COG6 family.

It localises to the golgi apparatus membrane. Acts as a component of the peripheral membrane COG complex that is involved in intra-Golgi protein trafficking. COG is located at the cis-Golgi, and regulates tethering of retrograde intra-Golgi vesicles and possibly a number of other membrane trafficking events. In Cryptococcus neoformans var. neoformans serotype D (strain B-3501A) (Filobasidiella neoformans), this protein is Conserved oligomeric Golgi complex subunit 6 (COG6).